Reading from the N-terminus, the 431-residue chain is Adenylosuccinate lyase (431 aa).

N(6)-(1,2-dicarboxyethyl)-AMP contacts are provided by residues 4 to 5 (RY), 67 to 69 (RHD), and 93 to 94 (TS). The active-site Proton donor/acceptor is His-141. Gln-212 provides a ligand contact to N(6)-(1,2-dicarboxyethyl)-AMP. Ser-262 (proton donor/acceptor) is an active-site residue. N(6)-(1,2-dicarboxyethyl)-AMP is bound by residues Ser-263, 268 to 270 (KRN), Asn-276, and 307 to 311 (SAERI).

This sequence belongs to the lyase 1 family. Adenylosuccinate lyase subfamily. In terms of assembly, homodimer and homotetramer. Residues from neighboring subunits contribute catalytic and substrate-binding residues to each active site.

The catalysed reaction is N(6)-(1,2-dicarboxyethyl)-AMP = fumarate + AMP. It carries out the reaction (2S)-2-[5-amino-1-(5-phospho-beta-D-ribosyl)imidazole-4-carboxamido]succinate = 5-amino-1-(5-phospho-beta-D-ribosyl)imidazole-4-carboxamide + fumarate. It participates in purine metabolism; AMP biosynthesis via de novo pathway; AMP from IMP: step 2/2. It functions in the pathway purine metabolism; IMP biosynthesis via de novo pathway; 5-amino-1-(5-phospho-D-ribosyl)imidazole-4-carboxamide from 5-amino-1-(5-phospho-D-ribosyl)imidazole-4-carboxylate: step 2/2. Functionally, catalyzes two reactions in de novo purine nucleotide biosynthesis. Catalyzes the breakdown of 5-aminoimidazole- (N-succinylocarboxamide) ribotide (SAICAR or 2-[5-amino-1-(5-phospho-beta-D-ribosyl)imidazole-4-carboxamido]succinate) to 5-aminoimidazole-4-carboxamide ribotide (AICAR or 5-amino-1-(5-phospho-beta-D-ribosyl)imidazole-4-carboxamide) and fumarate, and of adenylosuccinate (ADS or N(6)-(1,2-dicarboxyethyl)-AMP) to adenosine monophosphate (AMP) and fumarate. The sequence is that of Adenylosuccinate lyase (purB) from Staphylococcus epidermidis (strain ATCC 35984 / DSM 28319 / BCRC 17069 / CCUG 31568 / BM 3577 / RP62A).